The following is a 669-amino-acid chain: Beta-galactosidase (669 aa).

A signal peptide spans 1-24 (MDFPGAARLLSLLLVPLLLGPARG). The propeptide occupies 25–29 (LRNAS). An N-linked (GlcNAc...) asparagine glycan is attached at asparagine 27. Positions 84, 130, and 188 each coordinate substrate. The active-site Proton donor is the glutamate 189. An intrachain disulfide couples cysteine 196 to cysteine 231. Asparagine 248 carries an N-linked (GlcNAc...) asparagine glycan. The Nucleophile role is filled by glutamate 269. Tyrosine 334 contacts substrate. Asparagine 465, asparagine 499, asparagine 547, and asparagine 557 each carry an N-linked (GlcNAc...) asparagine glycan. An intrachain disulfide couples cysteine 628 to cysteine 636. A disordered region spans residues 649–669 (TPTSSHPLPDLSDRDSGWDRV). A compositionally biased stretch (basic and acidic residues) spans 659–669 (LSDRDSGWDRV).

Belongs to the glycosyl hydrolase 35 family. As to quaternary structure, homodimer. May form higher multimers.

Its subcellular location is the lysosome. The enzyme catalyses Hydrolysis of terminal non-reducing beta-D-galactose residues in beta-D-galactosides.. Functionally, cleaves beta-linked terminal galactosyl residues from gangliosides, glycoproteins, and glycosaminoglycans. This Felis catus (Cat) protein is Beta-galactosidase (GLB1).